We begin with the raw amino-acid sequence, 557 residues long: CTP synthase (557 aa).

Positions 1–267 (MAKFVFVTGG…CREVLDVLDL (267 aa)) are amidoligase domain. A CTP-binding site is contributed by Ser-13. A UTP-binding site is contributed by Ser-13. Residues 14–19 (SIGKGI) and Asp-71 contribute to the ATP site. Residues Asp-71 and Glu-141 each contribute to the Mg(2+) site. Residues 148–150 (DIE), 188–193 (KTKPTQ), and Lys-224 each bind CTP. Residues 188–193 (KTKPTQ) and Lys-224 each bind UTP. Residues 292 to 534 (KVALVGKYVQ…IEAAQQRLPC (243 aa)) enclose the Glutamine amidotransferase type-1 domain. Gly-354 contributes to the L-glutamine binding site. Cys-381 acts as the Nucleophile; for glutamine hydrolysis in catalysis. Residues 382 to 385 (LGMQ), Glu-405, and Arg-462 each bind L-glutamine. Residues His-507 and Glu-509 contribute to the active site. The disordered stretch occupies residues 532–557 (LPCSPSEAMRQQNNSAAGSSHPSLQP). Over residues 540–557 (MRQQNNSAAGSSHPSLQP) the composition is skewed to polar residues.

Belongs to the CTP synthase family. In terms of assembly, homotetramer.

It catalyses the reaction UTP + L-glutamine + ATP + H2O = CTP + L-glutamate + ADP + phosphate + 2 H(+). It carries out the reaction L-glutamine + H2O = L-glutamate + NH4(+). The enzyme catalyses UTP + NH4(+) + ATP = CTP + ADP + phosphate + 2 H(+). The protein operates within pyrimidine metabolism; CTP biosynthesis via de novo pathway; CTP from UDP: step 2/2. Its activity is regulated as follows. Allosterically activated by GTP, when glutamine is the substrate; GTP has no effect on the reaction when ammonia is the substrate. The allosteric effector GTP functions by stabilizing the protein conformation that binds the tetrahedral intermediate(s) formed during glutamine hydrolysis. Inhibited by the product CTP, via allosteric rather than competitive inhibition. Its function is as follows. Catalyzes the ATP-dependent amination of UTP to CTP with either L-glutamine or ammonia as the source of nitrogen. Regulates intracellular CTP levels through interactions with the four ribonucleotide triphosphates. The sequence is that of CTP synthase from Synechococcus sp. (strain CC9311).